The following is an 850-amino-acid chain: Polyhomeotic-like protein 2 (850 aa).

Disordered stretches follow at residues 1–79, 233–314, 335–386, 402–436, and 528–553; these read MENE…QYLQ, QQTP…RAVP, LPQP…DHAL, THVH…PPQR, and MTSG…KPPQ. Low complexity predominate over residues 15–32; that stretch reads SVTTNTSGTNSSSGCISS. An interaction with BMI1 region spans residues 33-56; it reads SGGGGGSGGRPTAPQISVYSGIPD. A compositionally biased stretch (low complexity) spans 343–352; it reads PQPQFVAQQQ. Polar residues-rich tracts occupy residues 368–380 and 402–425; these read LASV…LQSS and THVH…SQNG. Positions 529–543 are enriched in low complexity; it reads TSGNGNSASSIAGTA. The HD1 motif lies at 550–579; it reads KPPQAIVKPQILTHVIEGFVIQEGAEPFPV. Residues Lys590 and Lys592 each participate in a glycyl lysine isopeptide (Lys-Gly) (interchain with G-Cter in SUMO2) cross-link. The disordered stretch occupies residues 597-624; it reads FLPEKPPQQDHTTTTDSEMEEPYLQESK. Thr611 bears the Phosphothreonine mark. The residue at position 613 (Ser613) is a Phosphoserine. Residue Lys624 forms a Glycyl lysine isopeptide (Lys-Gly) (interchain with G-Cter in SUMO2) linkage. Residues 625–659 form an FCS-type zinc finger; that stretch reads EEGTPLKLKCELCGRVDFAYKFKRSKRFCSMACAK. Zn(2+) contacts are provided by Cys634, Cys637, Cys653, and Cys657. 2 disordered regions span residues 676–712 and 725–764; these read RSKL…SGTV and SQED…LDLP. A Glycyl lysine isopeptide (Lys-Gly) (interchain with G-Cter in SUMO2) cross-link involves residue Lys694. Residues 696-712 show a composition bias toward polar residues; sequence SLPTLTKDTKKQPSGTV. At Ser743 the chain carries Phosphoserine. Residues 786 to 850 form the SAM domain; that stretch reads WNVEDVYEFI…YARISMLKDS (65 aa). Lys839 is covalently cross-linked (Glycyl lysine isopeptide (Lys-Gly) (interchain with G-Cter in SUMO2)).

In terms of assembly, component of a PRC1-like complex. Interacts with CBX4. Interacts with BMI1, PCGF2, PHC1 and RNF2. Interacts with CHTOP. Interacts with the N-terminal region of the SP1 transcription factor and with MAPKAPK2. Interacts with SAMD7. Interacts with SAMD11. As to expression, isoform 2 is ubiquitously expressed in embryos and adult tissues at much higher level than isoform 1.

It is found in the nucleus. Functionally, component of a Polycomb group (PcG) multiprotein PRC1-like complex, a complex class required to maintain the transcriptionally repressive state of many genes, including Hox genes, throughout development. PcG PRC1 complex acts via chromatin remodeling and modification of histones; it mediates monoubiquitination of histone H2A 'Lys-119', rendering chromatin heritably changed in its expressibility. This chain is Polyhomeotic-like protein 2 (Phc2), found in Mus musculus (Mouse).